We begin with the raw amino-acid sequence, 110 residues long: Large ribosomal subunit protein uL22 (110 aa).

It belongs to the universal ribosomal protein uL22 family. Part of the 50S ribosomal subunit.

Functionally, this protein binds specifically to 23S rRNA; its binding is stimulated by other ribosomal proteins, e.g. L4, L17, and L20. It is important during the early stages of 50S assembly. It makes multiple contacts with different domains of the 23S rRNA in the assembled 50S subunit and ribosome. Its function is as follows. The globular domain of the protein is located near the polypeptide exit tunnel on the outside of the subunit, while an extended beta-hairpin is found that lines the wall of the exit tunnel in the center of the 70S ribosome. The chain is Large ribosomal subunit protein uL22 from Saccharophagus degradans (strain 2-40 / ATCC 43961 / DSM 17024).